The primary structure comprises 172 residues: Small ribosomal subunit protein uS5 (172 aa).

One can recognise an S5 DRBM domain in the interval 17–80 (LREKMISVNR…DEARRKMVKV (64 aa)).

It belongs to the universal ribosomal protein uS5 family. As to quaternary structure, part of the 30S ribosomal subunit. Contacts proteins S4 and S8.

With S4 and S12 plays an important role in translational accuracy. Its function is as follows. Located at the back of the 30S subunit body where it stabilizes the conformation of the head with respect to the body. The polypeptide is Small ribosomal subunit protein uS5 (Cupriavidus metallidurans (strain ATCC 43123 / DSM 2839 / NBRC 102507 / CH34) (Ralstonia metallidurans)).